A 111-amino-acid chain; its full sequence is Ribonuclease P protein component (111 aa).

It belongs to the RnpA family. In terms of assembly, consists of a catalytic RNA component (M1 or rnpB) and a protein subunit.

It catalyses the reaction Endonucleolytic cleavage of RNA, removing 5'-extranucleotides from tRNA precursor.. Functionally, RNaseP catalyzes the removal of the 5'-leader sequence from pre-tRNA to produce the mature 5'-terminus. It can also cleave other RNA substrates such as 4.5S RNA. The protein component plays an auxiliary but essential role in vivo by binding to the 5'-leader sequence and broadening the substrate specificity of the ribozyme. The protein is Ribonuclease P protein component of Borreliella afzelii (strain PKo) (Borrelia afzelii).